The sequence spans 352 residues: N-terminal EF-hand calcium-binding protein 1 (352 aa).

A Phosphoserine modification is found at serine 4. EF-hand domains follow at residues 26–61 (KGMS…GVLS) and 60–95 (LSGE…HLGE). Residues aspartate 39, asparagine 41, aspartate 43, lysine 45, and glutamate 50 each coordinate Ca(2+). Residues 135-163 (LLKETLNQLQSLQNSLECAMETTEEQTRQ) are a coiled coil. Positions 180-202 (GKRSSRRVQRHNSFSPNSPQFNV) are disordered. Over residues 190-202 (HNSFSPNSPQFNV) the composition is skewed to polar residues. 2 positions are modified to phosphoserine: serine 192 and serine 197. Residues 209–275 (EEDNQWMTQI…EEFQLALKHY (67 aa)) adopt a coiled-coil conformation. The ABM domain maps to 252–340 (MLVQRQMSVI…LETPELTSTM (89 aa)).

As to quaternary structure, interacts with STX1. May interact with CPNE6.

Its subcellular location is the cytoplasm. The sequence is that of N-terminal EF-hand calcium-binding protein 1 (NECAB1) from Pongo abelii (Sumatran orangutan).